A 372-amino-acid chain; its full sequence is Queuine tRNA-ribosyltransferase (372 aa).

Asp92 acts as the Proton acceptor in catalysis. Residues 92–96 (DSGGY), Asp146, Gln188, and Gly215 each bind substrate. Positions 246 to 252 (GIGSLRE) are RNA binding. The active-site Nucleophile is the Asp265. The interval 270–274 (TRLGR) is RNA binding; important for wobble base 34 recognition. Cys303, Cys305, Cys308, and His334 together coordinate Zn(2+).

It belongs to the queuine tRNA-ribosyltransferase family. As to quaternary structure, homodimer. Within each dimer, one monomer is responsible for RNA recognition and catalysis, while the other monomer binds to the replacement base PreQ1. Zn(2+) is required as a cofactor.

The catalysed reaction is 7-aminomethyl-7-carbaguanine + guanosine(34) in tRNA = 7-aminomethyl-7-carbaguanosine(34) in tRNA + guanine. Its pathway is tRNA modification; tRNA-queuosine biosynthesis. Its function is as follows. Catalyzes the base-exchange of a guanine (G) residue with the queuine precursor 7-aminomethyl-7-deazaguanine (PreQ1) at position 34 (anticodon wobble position) in tRNAs with GU(N) anticodons (tRNA-Asp, -Asn, -His and -Tyr). Catalysis occurs through a double-displacement mechanism. The nucleophile active site attacks the C1' of nucleotide 34 to detach the guanine base from the RNA, forming a covalent enzyme-RNA intermediate. The proton acceptor active site deprotonates the incoming PreQ1, allowing a nucleophilic attack on the C1' of the ribose to form the product. After dissociation, two additional enzymatic reactions on the tRNA convert PreQ1 to queuine (Q), resulting in the hypermodified nucleoside queuosine (7-(((4,5-cis-dihydroxy-2-cyclopenten-1-yl)amino)methyl)-7-deazaguanosine). This Prochlorococcus marinus subsp. pastoris (strain CCMP1986 / NIES-2087 / MED4) protein is Queuine tRNA-ribosyltransferase.